We begin with the raw amino-acid sequence, 298 residues long: Protease HtpX (298 aa).

Helical transmembrane passes span 4 to 24 (IALY…TLSL) and 41 to 61 (TSLL…SLLI). His-147 lines the Zn(2+) pocket. The active site involves Glu-148. His-151 serves as a coordination point for Zn(2+). The next 2 membrane-spanning stretches (helical) occupy residues 162 to 182 (LIQG…GYVI) and 193 to 213 (GLGF…GIAA). Glu-225 contributes to the Zn(2+) binding site.

The protein belongs to the peptidase M48B family. It depends on Zn(2+) as a cofactor.

It localises to the cell inner membrane. The protein is Protease HtpX of Alcanivorax borkumensis (strain ATCC 700651 / DSM 11573 / NCIMB 13689 / SK2).